The following is a 494-amino-acid chain: MARREGEVTETLLKKSTENRGEDRDGLGMKEKVWRESKKLWVVAGPAIFTRFSTSGLSLISQAFIGHLGSTELAAYSITLTVLLRFSNGILLGMASALETLCGQAYGAKQYHMLGIYLQRSWIVLTGCTICLMPIYIFAGPILLALGQEERLVRVARIIALWVIGINISFVPSFTCQMFLQAQSKNKIIAYVAAVSLGVHVFLSWLLVVHFDFGIAGAMTSSLVAHWLPNIAQVLFVTCGGCTETWRGFSWLAFKDLWPVFKLSVSSGGMICLELWYNSILILLTGNLKNAEVALNALAICININALEMMVAFGFMAAASVRVSNEIGSGNSNGAKFATMVVVSTSLSIGIIFFFIFLFLRERVSYIFTTSEAVATQVADLSPLLAFSILLNSIQPVLSGVAVGAGWQKYVTVVNLACYYLVGIPSGLFLGYVVGLQVKGVWLGMIFGIFVQTCVLTVMTMRTDWDQQVSSSLKRLNRWVEPESPSRNQTLQNE.

The interval 1–25 (MARREGEVTETLLKKSTENRGEDRD) is disordered. 12 helical membrane passes run 40–60 (LWVVAGPAIFTRFSTSGLSLI), 74–94 (AAYSITLTVLLRFSNGILLGM), 123–143 (IVLTGCTICLMPIYIFAGPIL), 158–178 (IIALWVIGINISFVPSFTCQM), 188–208 (IIAYVAAVSLGVHVFLSWLLV), 223–243 (LVAHWLPNIAQVLFVTCGGCT), 268–288 (GGMICLELWYNSILILLTGNL), 297–317 (ALAICININALEMMVAFGFMA), 340–360 (MVVVSTSLSIGIIFFFIFLFL), 384–404 (LLAFSILLNSIQPVLSGVAVG), 416–436 (LACYYLVGIPSGLFLGYVVGL), and 441–461 (VWLGMIFGIFVQTCVLTVMTM).

This sequence belongs to the multi antimicrobial extrusion (MATE) (TC 2.A.66.1) family.

Its subcellular location is the membrane. This is Protein DETOXIFICATION 23 from Arabidopsis thaliana (Mouse-ear cress).